Reading from the N-terminus, the 192-residue chain is MKLWVGLGNPEPGMARNRHNIGFMAIDVIADRHGFAPWRKRFSGLVSEGSVGGEKIVALKPLTYMNESGRAVQPASAFFKLPPDAVTVFHDELDLIPGKVRVKRGGGAAGHNGLRSIDRTLGTQDYWRVRLGIGHPGDKARVHGHVLGNFAKTDEDWLVDTLEAVSDAAPLLAAGKPEDFMTKVALLTKDTA.

Histidine 19 (proton acceptor) is an active-site residue. Positions 64, 66, and 112 each coordinate tRNA.

This sequence belongs to the PTH family. Monomer.

The protein resides in the cytoplasm. It catalyses the reaction an N-acyl-L-alpha-aminoacyl-tRNA + H2O = an N-acyl-L-amino acid + a tRNA + H(+). Its function is as follows. Hydrolyzes ribosome-free peptidyl-tRNAs (with 1 or more amino acids incorporated), which drop off the ribosome during protein synthesis, or as a result of ribosome stalling. Catalyzes the release of premature peptidyl moieties from peptidyl-tRNA molecules trapped in stalled 50S ribosomal subunits, and thus maintains levels of free tRNAs and 50S ribosomes. In Acidiphilium cryptum (strain JF-5), this protein is Peptidyl-tRNA hydrolase.